A 231-amino-acid chain; its full sequence is Probable glutathione S-transferase (231 aa).

Positions 4–96 (PNFELYGYFR…YLEEALPTNA (93 aa)) constitute a GST N-terminal domain. Glutathione contacts are provided by residues serine 14, glutamine 43, valine 57, 80–81 (QS), glutamine 124, and 128–130 (NLK). Residues 105–227 (NPVARAHVRT…HWQKQEDTPE (123 aa)) enclose the GST C-terminal domain.

It belongs to the GST superfamily. Zeta family. Homodimer.

It carries out the reaction RX + glutathione = an S-substituted glutathione + a halide anion + H(+). Functionally, probable glutathione S-transferase. This is Probable glutathione S-transferase from Coccidioides immitis (strain RS) (Valley fever fungus).